Here is a 131-residue protein sequence, read N- to C-terminus: Small ribosomal subunit protein uS9 (131 aa).

It belongs to the universal ribosomal protein uS9 family.

In Mannheimia succiniciproducens (strain KCTC 0769BP / MBEL55E), this protein is Small ribosomal subunit protein uS9.